We begin with the raw amino-acid sequence, 463 residues long: Bifunctional protein HldE (463 aa).

A ribokinase region spans residues 1 to 311 (MKKILVVGDL…EEIALILNQT (311 aa)). Position 191–194 (191–194 (NRFE)) interacts with ATP. The active site involves Asp260. Positions 334 to 463 (FTNGCFDLLH…IEKIKRTCND (130 aa)) are cytidylyltransferase.

In the N-terminal section; belongs to the carbohydrate kinase PfkB family. The protein in the C-terminal section; belongs to the cytidylyltransferase family. Homodimer.

It catalyses the reaction D-glycero-beta-D-manno-heptose 7-phosphate + ATP = D-glycero-beta-D-manno-heptose 1,7-bisphosphate + ADP + H(+). The enzyme catalyses D-glycero-beta-D-manno-heptose 1-phosphate + ATP + H(+) = ADP-D-glycero-beta-D-manno-heptose + diphosphate. It participates in nucleotide-sugar biosynthesis; ADP-L-glycero-beta-D-manno-heptose biosynthesis; ADP-L-glycero-beta-D-manno-heptose from D-glycero-beta-D-manno-heptose 7-phosphate: step 1/4. The protein operates within nucleotide-sugar biosynthesis; ADP-L-glycero-beta-D-manno-heptose biosynthesis; ADP-L-glycero-beta-D-manno-heptose from D-glycero-beta-D-manno-heptose 7-phosphate: step 3/4. Functionally, catalyzes the phosphorylation of D-glycero-D-manno-heptose 7-phosphate at the C-1 position to selectively form D-glycero-beta-D-manno-heptose-1,7-bisphosphate. In terms of biological role, catalyzes the ADP transfer from ATP to D-glycero-beta-D-manno-heptose 1-phosphate, yielding ADP-D-glycero-beta-D-manno-heptose. This Helicobacter pylori (strain G27) protein is Bifunctional protein HldE.